Consider the following 203-residue polypeptide: Thymidylate kinase (203 aa).

Position 10 to 17 (10 to 17 (GVEGSGKT)) interacts with ATP.

This sequence belongs to the thymidylate kinase family.

It carries out the reaction dTMP + ATP = dTDP + ADP. In terms of biological role, phosphorylation of dTMP to form dTDP in both de novo and salvage pathways of dTTP synthesis. The protein is Thymidylate kinase of Carboxydothermus hydrogenoformans (strain ATCC BAA-161 / DSM 6008 / Z-2901).